The following is a 159-amino-acid chain: Troponin C, skeletal muscle (159 aa).

N-acetylthreonine is present on Thr1. EF-hand domains are found at residues 14–49 (EMIA…LGQT), 50–85 (PTKE…QMKE), 90–125 (KSEE…SGEH), and 126–159 (VTDE…EGVQ). 19 residues coordinate Ca(2+): Asp27, Asp29, Asp33, Glu38, Asp63, Asp65, Ser67, Thr69, Glu74, Asp103, Asn105, Asp107, Tyr109, Glu114, Asp139, Asn141, Asp143, Arg145, and Glu150.

It belongs to the troponin C family.

Its function is as follows. Troponin is the central regulatory protein of striated muscle contraction. Tn consists of three components: Tn-I which is the inhibitor of actomyosin ATPase, Tn-T which contains the binding site for tropomyosin and Tn-C. The binding of calcium to Tn-C abolishes the inhibitory action of Tn on actin filaments. This Sus scrofa (Pig) protein is Troponin C, skeletal muscle (TNNC2).